Reading from the N-terminus, the 614-residue chain is Probable peptide-binding protein YejA (614 aa).

An N-terminal signal peptide occupies residues 1–27 (MILAPLKSRILIALAASALLIPAVASA).

It belongs to the bacterial solute-binding protein 5 family. As to quaternary structure, the complex is composed of one ATP-binding protein (YejF), two transmembrane proteins (YejB and YejE) and a solute-binding protein (YejA).

The protein localises to the periplasm. In terms of biological role, probably part of the ABC transporter complex YejABEF, which is likely involved in broad-spectrum peptide import. This chain is Probable peptide-binding protein YejA, found in Agrobacterium fabrum (strain C58 / ATCC 33970) (Agrobacterium tumefaciens (strain C58)).